Reading from the N-terminus, the 378-residue chain is Probable pectin lyase A (378 aa).

An N-terminal signal peptide occupies residues 1–19 (MKFPAFITAIISIASLSSA). 2 cysteine pairs are disulfide-bonded: cysteine 82-cysteine 101 and cysteine 91-cysteine 225. Residue arginine 255 is part of the active site. A disulfide bond links cysteine 321 and cysteine 329.

This sequence belongs to the polysaccharide lyase 1 family.

It localises to the secreted. The catalysed reaction is Eliminative cleavage of (1-&gt;4)-alpha-D-galacturonan methyl ester to give oligosaccharides with 4-deoxy-6-O-methyl-alpha-D-galact-4-enuronosyl groups at their non-reducing ends.. In terms of biological role, pectinolytic enzymes consist of four classes of enzymes: pectin lyase, polygalacturonase, pectin methylesterase and rhamnogalacturonase. Among pectinolytic enzymes, pectin lyase is the most important in depolymerization of pectin, since it cleaves internal glycosidic bonds of highly methylated pectins. In Aspergillus terreus (strain NIH 2624 / FGSC A1156), this protein is Probable pectin lyase A (pelA).